We begin with the raw amino-acid sequence, 290 residues long: Carbonic anhydrase-related protein (290 aa).

Position 5 is a phosphoserine (Ser5). Residues 27-289 (VEWGYEEGVE…LSDRVIRAAF (263 aa)) form the Alpha-carbonic anhydrase domain. The Proton donor/acceptor role is filled by His87. Positions 118 and 141 each coordinate Zn(2+).

Belongs to the alpha-carbonic anhydrase family.

In terms of biological role, does not have a carbonic anhydrase catalytic activity. In Rattus norvegicus (Rat), this protein is Carbonic anhydrase-related protein (Ca8).